Consider the following 99-residue polypeptide: Malonate decarboxylase acyl carrier protein (99 aa).

An O-(phosphoribosyl dephospho-coenzyme A)serine modification is found at serine 25.

The protein belongs to the MdcC family. In terms of processing, covalently binds the prosthetic group of malonate decarboxylase.

It localises to the cytoplasm. Its function is as follows. Subunit of malonate decarboxylase, it is an acyl carrier protein to which acetyl and malonyl thioester residues are bound via a 2'-(5''-phosphoribosyl)-3'-dephospho-CoA prosthetic group and turn over during the catalytic mechanism. This is Malonate decarboxylase acyl carrier protein from Stutzerimonas stutzeri (strain A1501) (Pseudomonas stutzeri).